The sequence spans 257 residues: Transmembrane protein 101 (257 aa).

8 consecutive transmembrane segments (helical) span residues 21–40 (VLLT…LYAE), 52–72 (VPYL…MSFG), 77–97 (WFAL…YIGG), 110–130 (YSRT…AGEL), 139–159 (SLQS…AYSL), 182–202 (LFFV…YVTL), 206–226 (ILAV…AYWH), and 233–253 (FWNQ…AVIL).

Its subcellular location is the membrane. May activate NF-kappa-B signaling pathways. This is Transmembrane protein 101 (TMEM101) from Homo sapiens (Human).